Here is a 442-residue protein sequence, read N- to C-terminus: Tubulin beta chain (442 aa).

Positions 11, 69, 138, 142, 143, 144, 204, and 226 each coordinate GTP. E69 contributes to the Mg(2+) binding site. A disordered region spans residues 421–442 (EYQQYQDATAEDEEEMDEEQME). The segment covering 429-442 (TAEDEEEMDEEQME) has biased composition (acidic residues).

The protein belongs to the tubulin family. Dimer of alpha and beta chains. A typical microtubule is a hollow water-filled tube with an outer diameter of 25 nm and an inner diameter of 15 nM. Alpha-beta heterodimers associate head-to-tail to form protofilaments running lengthwise along the microtubule wall with the beta-tubulin subunit facing the microtubule plus end conferring a structural polarity. Microtubules usually have 13 protofilaments but different protofilament numbers can be found in some organisms and specialized cells. It depends on Mg(2+) as a cofactor.

The protein resides in the cytoplasm. It localises to the cytoskeleton. In terms of biological role, tubulin is the major constituent of microtubules, a cylinder consisting of laterally associated linear protofilaments composed of alpha- and beta-tubulin heterodimers. Microtubules grow by the addition of GTP-tubulin dimers to the microtubule end, where a stabilizing cap forms. Below the cap, tubulin dimers are in GDP-bound state, owing to GTPase activity of alpha-tubulin. The sequence is that of Tubulin beta chain (TUBB1) from Stylonychia lemnae (Ciliate).